A 158-amino-acid chain; its full sequence is Cyclic pyranopterin monophosphate synthase (158 aa).

Substrate-binding positions include 75–77 and 113–114; these read LCH and ME. Aspartate 128 is a catalytic residue.

It belongs to the MoaC family. In terms of assembly, homohexamer; trimer of dimers.

It catalyses the reaction (8S)-3',8-cyclo-7,8-dihydroguanosine 5'-triphosphate = cyclic pyranopterin phosphate + diphosphate. It participates in cofactor biosynthesis; molybdopterin biosynthesis. Catalyzes the conversion of (8S)-3',8-cyclo-7,8-dihydroguanosine 5'-triphosphate to cyclic pyranopterin monophosphate (cPMP). The chain is Cyclic pyranopterin monophosphate synthase from Actinobacillus pleuropneumoniae serotype 5b (strain L20).